Consider the following 197-residue polypeptide: Holliday junction branch migration complex subunit RuvA (197 aa).

Residues 1 to 64 form a domain I region; sequence MYEYIKGKYI…EDFIGVYGFL (64 aa). The domain II stretch occupies residues 65–144; sequence TKDELSMFKL…DILEEDDEQI (80 aa). Positions 145 to 149 are flexible linker; sequence INKVA. Residues 149–197 form a domain III region; that stretch reads ADDKKVLEAVAALVTLGYSEKEANKVINSCDKNNSLEQIIKEALKYLMK.

It belongs to the RuvA family. In terms of assembly, homotetramer. Forms an RuvA(8)-RuvB(12)-Holliday junction (HJ) complex. HJ DNA is sandwiched between 2 RuvA tetramers; dsDNA enters through RuvA and exits via RuvB. An RuvB hexamer assembles on each DNA strand where it exits the tetramer. Each RuvB hexamer is contacted by two RuvA subunits (via domain III) on 2 adjacent RuvB subunits; this complex drives branch migration. In the full resolvosome a probable DNA-RuvA(4)-RuvB(12)-RuvC(2) complex forms which resolves the HJ.

It localises to the cytoplasm. The RuvA-RuvB-RuvC complex processes Holliday junction (HJ) DNA during genetic recombination and DNA repair, while the RuvA-RuvB complex plays an important role in the rescue of blocked DNA replication forks via replication fork reversal (RFR). RuvA specifically binds to HJ cruciform DNA, conferring on it an open structure. The RuvB hexamer acts as an ATP-dependent pump, pulling dsDNA into and through the RuvAB complex. HJ branch migration allows RuvC to scan DNA until it finds its consensus sequence, where it cleaves and resolves the cruciform DNA. The chain is Holliday junction branch migration complex subunit RuvA from Clostridium botulinum (strain ATCC 19397 / Type A).